Consider the following 477-residue polypeptide: MEWDTVIGLEVHAQLKTKSKLFSGASTAFGATPNSQTSFIDAGLPGVLPVLNEQAIIMAIQFGLAIHGTINDLSVFERKNYFYPDLPKGYQISQYQKPIVTNGYLNIQLGNNLEKTVHIARAHLEEDAGKSLHDAHTDYTGIDLNRAGTPLLEIVTTPCLYSAEEAINYLKTLHQLVRFLGICDGNMQEGSFRCDVNLSIKPKGSSVLGTRTELKNLNSFRFIEKAIAFEQARHQDILESGLSVIQETRLYNPDNNTTQAMRGKENENDYRYFPDPDLLPIHIDKEQVEEIKNNLPDLPEAISKELKNTPSLNDEDINFILSSPDTYQYYKKIKSLCPAADKTIINWLKGQYAAFLNEHNLTFETPPISAKTMAAFLSKIHEKKISSSIAKNIFSMLCTGEKDIDAIIEREGYQQQNDNSALEEIVEQIIKQYPEQVTEYKAGKEKLLAFFIGQAMKQTKGKANPEQINLLLKKHLG.

Belongs to the GatB/GatE family. GatB subfamily. As to quaternary structure, heterotrimer of A, B and C subunits.

The enzyme catalyses L-glutamyl-tRNA(Gln) + L-glutamine + ATP + H2O = L-glutaminyl-tRNA(Gln) + L-glutamate + ADP + phosphate + H(+). It catalyses the reaction L-aspartyl-tRNA(Asn) + L-glutamine + ATP + H2O = L-asparaginyl-tRNA(Asn) + L-glutamate + ADP + phosphate + 2 H(+). Its function is as follows. Allows the formation of correctly charged Asn-tRNA(Asn) or Gln-tRNA(Gln) through the transamidation of misacylated Asp-tRNA(Asn) or Glu-tRNA(Gln) in organisms which lack either or both of asparaginyl-tRNA or glutaminyl-tRNA synthetases. The reaction takes place in the presence of glutamine and ATP through an activated phospho-Asp-tRNA(Asn) or phospho-Glu-tRNA(Gln). This chain is Aspartyl/glutamyl-tRNA(Asn/Gln) amidotransferase subunit B, found in Legionella pneumophila subsp. pneumophila (strain Philadelphia 1 / ATCC 33152 / DSM 7513).